The chain runs to 440 residues: tRNA modification GTPase MnmE (440 aa).

The (6S)-5-formyl-5,6,7,8-tetrahydrofolate site is built by Arg-22, Glu-79, and Lys-118. The region spanning 214–366 is the TrmE-type G domain; the sequence is GLIFTILGKP…LKTMLEAEAR (153 aa). GTP is bound by residues 224 to 229, 243 to 249, and 268 to 271; these read NAGKSS, SSQPGTT, and DTAG. Mg(2+) contacts are provided by Ser-228 and Thr-249. Residue Lys-440 coordinates (6S)-5-formyl-5,6,7,8-tetrahydrofolate.

It belongs to the TRAFAC class TrmE-Era-EngA-EngB-Septin-like GTPase superfamily. TrmE GTPase family. As to quaternary structure, homodimer. Heterotetramer of two MnmE and two MnmG subunits. Requires K(+) as cofactor.

Its subcellular location is the cytoplasm. In terms of biological role, exhibits a very high intrinsic GTPase hydrolysis rate. Involved in the addition of a carboxymethylaminomethyl (cmnm) group at the wobble position (U34) of certain tRNAs, forming tRNA-cmnm(5)s(2)U34. The chain is tRNA modification GTPase MnmE from Granulibacter bethesdensis (strain ATCC BAA-1260 / CGDNIH1).